Consider the following 847-residue polypeptide: Putative membrane protein SCO5905 (847 aa).

12 helical membrane-spanning segments follow: residues 18-38 (AVVV…APAL), 187-207 (GGDK…LLAI), 215-235 (LVPL…GAIL), 248-268 (ASIM…IITA), 302-322 (IVLA…GFGP), 326-346 (LGVA…VLLL), 381-401 (VKVA…LLGY), 539-559 (DTTL…VLLL), 562-582 (LLAP…TLGA), 600-620 (VTAY…IFIM), 643-663 (TGGV…VLMT), and 672-692 (FGFA…PLLV). The segment at 708 to 729 (RPGTPQTPSTPTSEPPSADAPA) is disordered. Helical transmembrane passes span 744–764 (FTWI…GMYL), 778–798 (FGTL…LVAI), and 808–828 (TIFA…EIWA).

This sequence belongs to the resistance-nodulation-cell division (RND) (TC 2.A.6) family. MmpL subfamily.

It is found in the cell membrane. The protein is Putative membrane protein SCO5905 of Streptomyces coelicolor (strain ATCC BAA-471 / A3(2) / M145).